The following is a 93-amino-acid chain: Muconolactone Delta-isomerase (93 aa).

It belongs to the muconolactone Delta-isomerase family. As to quaternary structure, homodecamer.

The enzyme catalyses (S)-muconolactone = (4,5-dihydro-5-oxofuran-2-yl)-acetate. Its pathway is aromatic compound metabolism; beta-ketoadipate pathway; 5-oxo-4,5-dihydro-2-furylacetate from catechol: step 3/3. The protein is Muconolactone Delta-isomerase (catC) of Rhodococcus opacus (Nocardia opaca).